Consider the following 391-residue polypeptide: Chorismate synthase (391 aa).

Arg48 contributes to the NADP(+) binding site. Residues 126–128 (RAS), Gly286, 301–305 (KPTSS), and Arg328 each bind FMN.

It belongs to the chorismate synthase family. Requires FMNH2 as cofactor.

It carries out the reaction 5-O-(1-carboxyvinyl)-3-phosphoshikimate = chorismate + phosphate. The protein operates within metabolic intermediate biosynthesis; chorismate biosynthesis; chorismate from D-erythrose 4-phosphate and phosphoenolpyruvate: step 7/7. Functionally, catalyzes the anti-1,4-elimination of the C-3 phosphate and the C-6 proR hydrogen from 5-enolpyruvylshikimate-3-phosphate (EPSP) to yield chorismate, which is the branch point compound that serves as the starting substrate for the three terminal pathways of aromatic amino acid biosynthesis. This reaction introduces a second double bond into the aromatic ring system. The protein is Chorismate synthase of Saccharolobus islandicus (strain Y.N.15.51 / Yellowstone #2) (Sulfolobus islandicus).